A 219-amino-acid polypeptide reads, in one-letter code: Proteasome subunit beta 2 (219 aa).

The propeptide at 1–25 (MAEWIAGGLEGPAGRGLDERVVRSG) is removed in mature form; by autocatalysis. The Nucleophile role is filled by Thr26.

The protein belongs to the peptidase T1B family. In terms of assembly, the 20S proteasome core is composed of 14 alpha and 14 beta subunits that assemble into four stacked heptameric rings, resulting in a barrel-shaped structure. The two inner rings, each composed of seven catalytic beta subunits, are sandwiched by two outer rings, each composed of seven alpha subunits. The catalytic chamber with the active sites is on the inside of the barrel. Has a gated structure, the ends of the cylinder being occluded by the N-termini of the alpha-subunits. Is capped at one or both ends by the proteasome regulatory ATPase, PAN.

The protein resides in the cytoplasm. The catalysed reaction is Cleavage of peptide bonds with very broad specificity.. With respect to regulation, the formation of the proteasomal ATPase PAN-20S proteasome complex, via the docking of the C-termini of PAN into the intersubunit pockets in the alpha-rings, triggers opening of the gate for substrate entry. Interconversion between the open-gate and close-gate conformations leads to a dynamic regulation of the 20S proteasome proteolysis activity. Functionally, component of the proteasome core, a large protease complex with broad specificity involved in protein degradation. The chain is Proteasome subunit beta 2 from Aeropyrum pernix (strain ATCC 700893 / DSM 11879 / JCM 9820 / NBRC 100138 / K1).